The following is a 195-amino-acid chain: ATP-dependent Clp protease proteolytic subunit (195 aa).

Residue Ser-99 is the Nucleophile of the active site. Residue His-124 is part of the active site.

The protein belongs to the peptidase S14 family. As to quaternary structure, fourteen ClpP subunits assemble into 2 heptameric rings which stack back to back to give a disk-like structure with a central cavity, resembling the structure of eukaryotic proteasomes.

It localises to the cytoplasm. The catalysed reaction is Hydrolysis of proteins to small peptides in the presence of ATP and magnesium. alpha-casein is the usual test substrate. In the absence of ATP, only oligopeptides shorter than five residues are hydrolyzed (such as succinyl-Leu-Tyr-|-NHMec, and Leu-Tyr-Leu-|-Tyr-Trp, in which cleavage of the -Tyr-|-Leu- and -Tyr-|-Trp bonds also occurs).. In terms of biological role, cleaves peptides in various proteins in a process that requires ATP hydrolysis. Has a chymotrypsin-like activity. Plays a major role in the degradation of misfolded proteins. The chain is ATP-dependent Clp protease proteolytic subunit from Carboxydothermus hydrogenoformans (strain ATCC BAA-161 / DSM 6008 / Z-2901).